The chain runs to 106 residues: Immunoglobulin lambda constant 7 (106 aa).

The Ig-like domain maps to 7–101; sequence PSVTLFPPSS…EGSTVEKTVA (95 aa). Cysteine 28 and cysteine 87 are joined by a disulfide.

In terms of assembly, immunoglobulins are composed of two identical heavy chains and two identical light chains; disulfide-linked.

The protein resides in the secreted. The protein localises to the cell membrane. Functionally, constant region of immunoglobulin light chains. Immunoglobulins, also known as antibodies, are membrane-bound or secreted glycoproteins produced by B lymphocytes. In the recognition phase of humoral immunity, the membrane-bound immunoglobulins serve as receptors which, upon binding of a specific antigen, trigger the clonal expansion and differentiation of B lymphocytes into immunoglobulins-secreting plasma cells. Secreted immunoglobulins mediate the effector phase of humoral immunity, which results in the elimination of bound antigens. The antigen binding site is formed by the variable domain of one heavy chain, together with that of its associated light chain. Thus, each immunoglobulin has two antigen binding sites with remarkable affinity for a particular antigen. The variable domains are assembled by a process called V-(D)-J rearrangement and can then be subjected to somatic hypermutations which, after exposure to antigen and selection, allow affinity maturation for a particular antigen. The polypeptide is Immunoglobulin lambda constant 7 (Homo sapiens (Human)).